A 166-amino-acid chain; its full sequence is Large ribosomal subunit protein uL10 (166 aa).

This sequence belongs to the universal ribosomal protein uL10 family. As to quaternary structure, part of the ribosomal stalk of the 50S ribosomal subunit. The N-terminus interacts with L11 and the large rRNA to form the base of the stalk. The C-terminus forms an elongated spine to which L12 dimers bind in a sequential fashion forming a multimeric L10(L12)X complex.

Its function is as follows. Forms part of the ribosomal stalk, playing a central role in the interaction of the ribosome with GTP-bound translation factors. In Shewanella amazonensis (strain ATCC BAA-1098 / SB2B), this protein is Large ribosomal subunit protein uL10.